Reading from the N-terminus, the 738-residue chain is Melanotransferrin (738 aa).

Residues 1-19 form the signal peptide; the sequence is MRGPSGALWLLLALRTVLG. The interval 20–30 is antigenic epitope; it reads GMEVRWCATSD. Transferrin-like domains follow at residues 23–357 and 366–706; these read VRWC…GLLC and LRWC…GMSS. 2 cysteine pairs are disulfide-bonded: Cys-26–Cys-63 and Cys-36–Cys-54. Residue Asn-38 is glycosylated (N-linked (GlcNAc...) asparagine). Asp-78 and Tyr-107 together coordinate Fe(3+). Disulfide bonds link Cys-130–Cys-216, Cys-172–Cys-189, Cys-186–Cys-199, and Cys-257–Cys-271. Thr-132 lines the hydrogencarbonate pocket. The N-linked (GlcNAc...) asparagine glycan is linked to Asn-135. Hydrogencarbonate-binding residues include Arg-136, Val-138, and Gly-139. Position 210 (Tyr-210) interacts with Fe(3+). The Fe(3+) site is built by His-279, Ser-421, and Tyr-451. Residue Ser-462 is modified to Phosphoserine; by FAM20C. A glycan (N-linked (GlcNAc...) asparagine) is linked at Asn-515. Fe(3+)-binding residues include Tyr-556 and His-625. Residue Cys-709 is the site of GPI-anchor amidated cysteine attachment. Residues 710-738 constitute a propeptide, removed in mature form; sequence SGAAAPAPGAPLLPLLLPALAARLLPPAL.

This sequence belongs to the transferrin family. Found predominantly in human melanomas and in certain fetal tissues; also found in liver, epithelium, umbilical chord, placenta and sweat gland ducts.

It localises to the cell membrane. In terms of biological role, involved in iron cellular uptake. Seems to be internalized and then recycled back to the cell membrane. Binds a single atom of iron per subunit. Could also bind zinc. The protein is Melanotransferrin of Homo sapiens (Human).